The primary structure comprises 135 residues: Fatty acid-binding protein 5 (135 aa).

At Ala2 the chain carries N-acetylalanine. Lys17 carries the post-translational modification N6-acetyllysine. The Nuclear localization signal signature appears at 24–34 (KELGVGIALRK). N-eicosanoyl ethanolamine contacts are provided by Cys43 and Arg109. A disulfide bridge connects residues Cys120 and Cys127. 129 to 131 (RIY) is a binding site for (9Z,12Z)-octadecadienoate. Tyr131 lines the N-eicosanoyl ethanolamine pocket. Residue Tyr131 coordinates hexadecanoate. Tyr131 is subject to Phosphotyrosine.

Belongs to the calycin superfamily. Fatty-acid binding protein (FABP) family. As to quaternary structure, monomer. Homodimer. As to expression, keratinocytes; highly expressed in psoriatic skin. Expressed in brain gray matter.

It is found in the cytoplasm. Its subcellular location is the nucleus. The protein localises to the synapse. It localises to the postsynaptic density. The protein resides in the secreted. The catalysed reaction is hexadecanoate(out) = hexadecanoate(in). The enzyme catalyses (9Z,12Z)-octadecadienoate(out) = (9Z,12Z)-octadecadienoate(in). It catalyses the reaction (9Z)-octadecenoate(out) = (9Z)-octadecenoate(in). Intracellular carrier for long-chain fatty acids and related active lipids, such as endocannabinoids, that regulate the metabolism and actions of the ligands they bind. In addition to the cytosolic transport, selectively delivers specific fatty acids from the cytosol to the nucleus, wherein they activate nuclear receptors. Delivers retinoic acid to the nuclear receptor peroxisome proliferator-activated receptor delta; which promotes proliferation and survival. May also serve as a synaptic carrier of endocannabinoid at central synapses and thus controls retrograde endocannabinoid signaling. Modulates inflammation by regulating PTGES induction via NF-kappa-B activation, and prostaglandin E2 (PGE2) biosynthesis during inflammation. May be involved in keratinocyte differentiation. This chain is Fatty acid-binding protein 5, found in Homo sapiens (Human).